The following is a 610-amino-acid chain: Phosphomethylpyrimidine synthase (610 aa).

Substrate contacts are provided by residues Asn216, Met245, Tyr274, His310, 330 to 332 (SRG), 371 to 374 (DGLR), and Glu410. His414 contacts Zn(2+). Tyr437 contributes to the substrate binding site. His478 is a binding site for Zn(2+). Positions 558, 561, and 566 each coordinate [4Fe-4S] cluster.

This sequence belongs to the ThiC family. As to quaternary structure, homodimer. Requires [4Fe-4S] cluster as cofactor.

The catalysed reaction is 5-amino-1-(5-phospho-beta-D-ribosyl)imidazole + S-adenosyl-L-methionine = 4-amino-2-methyl-5-(phosphooxymethyl)pyrimidine + CO + 5'-deoxyadenosine + formate + L-methionine + 3 H(+). It functions in the pathway cofactor biosynthesis; thiamine diphosphate biosynthesis. Functionally, catalyzes the synthesis of the hydroxymethylpyrimidine phosphate (HMP-P) moiety of thiamine from aminoimidazole ribotide (AIR) in a radical S-adenosyl-L-methionine (SAM)-dependent reaction. The protein is Phosphomethylpyrimidine synthase of Rhizobium etli (strain ATCC 51251 / DSM 11541 / JCM 21823 / NBRC 15573 / CFN 42).